The primary structure comprises 383 residues: TOM1-like protein 2 (383 aa).

One can recognise a VHS domain in the interval 45–178 (ATLETLEEPN…GLHARGEENS (134 aa)). The region spanning 223 to 310 (LSIKDKKEQI…VLSSYKKPDE (88 aa)) is the GAT domain. The disordered stretch occupies residues 305-383 (YKKPDETEKK…LGLSSDEDEK (79 aa)). Basic and acidic residues-rich tracts occupy residues 306 to 316 (KKPDETEKKAS) and 339 to 354 (EPVK…KHSE). Ser377 and Ser378 each carry phosphoserine.

The protein belongs to the TOM1 family. Ubiquitously expressed.

Its subcellular location is the cytoplasm. The protein localises to the membrane. Its function is as follows. Binds ubiquitin in vitro. Might contribute to the loading of the ESCRT machinery. In Arabidopsis thaliana (Mouse-ear cress), this protein is TOM1-like protein 2.